Consider the following 475-residue polypeptide: Ankyrin repeat, SAM and basic leucine zipper domain-containing protein 1 (475 aa).

Positions 1-25 (MAAGALRGLPVAGGGESSESEDDGW) are disordered. 3 positions are modified to phosphoserine: Ser-17, Ser-18, and Ser-20. ANK repeat units follow at residues 45–74 (EKKEKFKKAMTIGDVSLVQELLDSGISVDS), 78–107 (YGWTPLMYAASVANAELVRVLLDRGANASF), 110–144 (DKQTILITACSAHGSEEQILKCVELLLSRNADPNV), 148–177 (RLMTPIMYAARDGHTQVVALLVAHGAEVNT), 181–210 (NGYTALTWAARQGHKNIVLKLLELGANKML), and 214–243 (DGKMPSEIAKRNKHHEIFNLLSFTLNPLEG). Residues 272–334 (SYTAFGDLEV…KILAALKELQ (63 aa)) form the SAM domain.

In terms of assembly, interacts with DDX4, PIWIL1, RANBP9 and TDRD1.

Its subcellular location is the cytoplasm. Its function is as follows. Plays a central role during spermatogenesis by repressing transposable elements and preventing their mobilization, which is essential for the germline integrity. Acts via the piRNA metabolic process, which mediates the repression of transposable elements during meiosis by forming complexes composed of piRNAs and Piwi proteins and governs the methylation and subsequent repression of transposons. Its association with pi-bodies suggests a participation in the primary piRNAs metabolic process. Required prior to the pachytene stage to facilitate the production of multiple types of piRNAs, including those associated with repeats involved in the regulation of retrotransposons. May act by mediating protein-protein interactions during germ cell maturation. The protein is Ankyrin repeat, SAM and basic leucine zipper domain-containing protein 1 (ASZ1) of Papio anubis (Olive baboon).